The following is a 422-amino-acid chain: Inhibitor of growth protein 1 (422 aa).

The disordered stretch occupies residues 261–349 (ELGDTAGNSG…EASPADLPID (89 aa)). Lys-278 is covalently cross-linked (Glycyl lysine isopeptide (Lys-Gly) (interchain with G-Cter in SUMO2)). Residues 297 to 314 (RNNENRENASSNHDHDDG) are compositionally biased toward basic and acidic residues. The span at 322 to 334 (KKAKTSKKKKRSK) shows a compositional bias: basic residues. The segment at 353–402 (PTYCLCNQVSYGEMIGCDNDECPIEWFHFSCVGLNHKPKGKWYCPKCRGE) adopts a PHD-type zinc-finger fold. 8 residues coordinate Zn(2+): Cys-356, Cys-358, Cys-369, Cys-374, His-380, Cys-383, Cys-396, and Cys-399. The tract at residues 405–422 (KTMDKALEKSKKERAYNR) is PBR.

The protein belongs to the ING family. As to quaternary structure, interacts with H3K4me3 and to a lesser extent with H3K4me2. Interacts with TP53. Isoform 2 interacts with RSL1D1. In terms of tissue distribution, isoform 2 was expressed in all normal tissues and cells examined, as well as in all breast cancer and melanoma cell lines examined. Isoform 3 was expressed in testis, liver, and kidney, weakly expressed in colon and brain and not expressed in breast and cultured melanocytes. Isoform 4 was highly expressed in testis and weakly expressed in brain, but not expressed in breast, colon, kidney, melanocytes, breast cancer or melanoma cell lines.

The protein resides in the nucleus. Cooperates with p53/TP53 in the negative regulatory pathway of cell growth by modulating p53-dependent transcriptional activation. Implicated as a tumor suppressor gene. This is Inhibitor of growth protein 1 (ING1) from Homo sapiens (Human).